Consider the following 68-residue polypeptide: Large ribosomal subunit protein eL24 (68 aa).

Residues Cys-7, Cys-10, Cys-33, and Cys-37 each contribute to the Zn(2+) site. The segment at 7 to 37 adopts a C4-type zinc-finger fold; sequence CSYCGREFEPGTGKMFVRNDGRVLFFCSSKC.

The protein belongs to the eukaryotic ribosomal protein eL24 family. In terms of assembly, part of the 50S ribosomal subunit. Forms a cluster with proteins L3 and L14. It depends on Zn(2+) as a cofactor.

Functionally, binds to the 23S rRNA. The polypeptide is Large ribosomal subunit protein eL24 (Thermococcus gammatolerans (strain DSM 15229 / JCM 11827 / EJ3)).